The chain runs to 598 residues: Proline--tRNA ligase (598 aa).

The protein belongs to the class-II aminoacyl-tRNA synthetase family. ProS type 1 subfamily. In terms of assembly, homodimer.

It is found in the cytoplasm. The catalysed reaction is tRNA(Pro) + L-proline + ATP = L-prolyl-tRNA(Pro) + AMP + diphosphate. Catalyzes the attachment of proline to tRNA(Pro) in a two-step reaction: proline is first activated by ATP to form Pro-AMP and then transferred to the acceptor end of tRNA(Pro). As ProRS can inadvertently accommodate and process non-cognate amino acids such as alanine and cysteine, to avoid such errors it has two additional distinct editing activities against alanine. One activity is designated as 'pretransfer' editing and involves the tRNA(Pro)-independent hydrolysis of activated Ala-AMP. The other activity is designated 'posttransfer' editing and involves deacylation of mischarged Ala-tRNA(Pro). The misacylated Cys-tRNA(Pro) is not edited by ProRS. This Synechococcus sp. (strain CC9311) protein is Proline--tRNA ligase.